A 103-amino-acid polypeptide reads, in one-letter code: Integration host factor subunit alpha (103 aa).

Residues 50–72 form a disordered region; it reads GNFNLRDKGERPGRNPKTGEEIP. Residues 54–69 show a composition bias toward basic and acidic residues; sequence LRDKGERPGRNPKTGE.

Belongs to the bacterial histone-like protein family. Heterodimer of an alpha and a beta chain.

Functionally, this protein is one of the two subunits of integration host factor, a specific DNA-binding protein that functions in genetic recombination as well as in transcriptional and translational control. This Coxiella burnetii (strain CbuK_Q154) (Coxiella burnetii (strain Q154)) protein is Integration host factor subunit alpha.